A 141-amino-acid chain; its full sequence is Large ribosomal subunit protein uL11 (141 aa).

It belongs to the universal ribosomal protein uL11 family. Part of the ribosomal stalk of the 50S ribosomal subunit. Interacts with L10 and the large rRNA to form the base of the stalk. L10 forms an elongated spine to which L12 dimers bind in a sequential fashion forming a multimeric L10(L12)X complex. In terms of processing, one or more lysine residues are methylated.

Its function is as follows. Forms part of the ribosomal stalk which helps the ribosome interact with GTP-bound translation factors. In Levilactobacillus brevis (strain ATCC 367 / BCRC 12310 / CIP 105137 / JCM 1170 / LMG 11437 / NCIMB 947 / NCTC 947) (Lactobacillus brevis), this protein is Large ribosomal subunit protein uL11.